We begin with the raw amino-acid sequence, 568 residues long: Urease subunit alpha (568 aa).

Ni(2+) contacts are provided by histidine 134, histidine 136, and lysine 217. Lysine 217 is subject to N6-carboxylysine. Residue histidine 219 participates in substrate binding. Residues histidine 246 and histidine 272 each coordinate Ni(2+). The active-site Proton donor is histidine 320. Aspartate 360 serves as a coordination point for Ni(2+).

It belongs to the metallo-dependent hydrolases superfamily. Urease alpha subunit family. Heterotrimer of UreA (gamma), UreB (beta) and UreC (alpha) subunits. Three heterotrimers associate to form the active enzyme. The cofactor is Ni cation. In terms of processing, carboxylation allows a single lysine to coordinate two nickel ions.

It localises to the cytoplasm. The catalysed reaction is urea + 2 H2O + H(+) = hydrogencarbonate + 2 NH4(+). Its pathway is nitrogen metabolism; urea degradation; CO(2) and NH(3) from urea (urease route): step 1/1. The polypeptide is Urease subunit alpha (Marinomonas sp. (strain MWYL1)).